The chain runs to 95 residues: NELL2-interacting cell ontogeny regulator 1 (95 aa).

The first 34 residues, 1–34, serve as a signal peptide directing secretion; the sequence is MAPPPACRSPMSPPPPPLLLLLLSLALLGARARA.

This sequence belongs to the NICOL family. As to quaternary structure, interacts with NELL2; triggers epididymal differentiation. Interacts with cell surface receptor TFRC; the interaction mediates uptake of NICOL1 into fibroblasts. Detected in the brain (at protein level). Also expressed at low levels in the kidney, primarily in tubular epithelial cells.

The protein resides in the secreted. It is found in the cytoplasm. It localises to the perinuclear region. MRNA-binding protein which interacts with a range of target mRNAs including SERPINE1, ACTA2, CCN2 and COL4A1 and may promote extracellular matrix production. Binds to the 3'-UTR of SERPINE1 mRNA and stabilizes the mRNA, possibly by competing for binding with SERBP1 and preventing SERBP1-mediated mRNA degradation. Also binds to the 3'-UTR of ACTA2. Testis-derived lumicrine factor that triggers epididymal differentiation and sperm maturation. This is NELL2-interacting cell ontogeny regulator 1 from Homo sapiens (Human).